Here is an 835-residue protein sequence, read N- to C-terminus: Phenylalanine--tRNA ligase beta subunit (835 aa).

One can recognise a tRNA-binding domain in the interval 44-160 (PATTGPLVLG…ESGQPGDDAR (117 aa)). Residues 419-494 (PTMPSITMPV…RLEGLEAIPT (76 aa)) form the B5 domain. Residues Asp-472, Asp-478, Glu-481, and Glu-482 each contribute to the Mg(2+) site. The FDX-ACB domain maps to 741-834 (SAFPALHQDI…AKERLGAEMR (94 aa)).

The protein belongs to the phenylalanyl-tRNA synthetase beta subunit family. Type 1 subfamily. Tetramer of two alpha and two beta subunits. Mg(2+) is required as a cofactor.

It localises to the cytoplasm. It carries out the reaction tRNA(Phe) + L-phenylalanine + ATP = L-phenylalanyl-tRNA(Phe) + AMP + diphosphate + H(+). The sequence is that of Phenylalanine--tRNA ligase beta subunit from Corynebacterium efficiens (strain DSM 44549 / YS-314 / AJ 12310 / JCM 11189 / NBRC 100395).